Consider the following 343-residue polypeptide: Aspartate carbamoyltransferase catalytic subunit (343 aa).

Positions 91 and 92 each coordinate carbamoyl phosphate. K119 is a binding site for L-aspartate. Carbamoyl phosphate contacts are provided by R141, H171, and Q174. Positions 204 and 259 each coordinate L-aspartate. Carbamoyl phosphate is bound by residues G300 and P301.

It belongs to the aspartate/ornithine carbamoyltransferase superfamily. ATCase family. As to quaternary structure, heterododecamer (2C3:3R2) of six catalytic PyrB chains organized as two trimers (C3), and six regulatory PyrI chains organized as three dimers (R2).

It catalyses the reaction carbamoyl phosphate + L-aspartate = N-carbamoyl-L-aspartate + phosphate + H(+). It participates in pyrimidine metabolism; UMP biosynthesis via de novo pathway; (S)-dihydroorotate from bicarbonate: step 2/3. Its function is as follows. Catalyzes the condensation of carbamoyl phosphate and aspartate to form carbamoyl aspartate and inorganic phosphate, the committed step in the de novo pyrimidine nucleotide biosynthesis pathway. This Burkholderia ambifaria (strain MC40-6) protein is Aspartate carbamoyltransferase catalytic subunit.